Reading from the N-terminus, the 452-residue chain is Exodeoxyribonuclease 7 large subunit (452 aa).

Belongs to the XseA family. In terms of assembly, heterooligomer composed of large and small subunits.

It localises to the cytoplasm. It carries out the reaction Exonucleolytic cleavage in either 5'- to 3'- or 3'- to 5'-direction to yield nucleoside 5'-phosphates.. Functionally, bidirectionally degrades single-stranded DNA into large acid-insoluble oligonucleotides, which are then degraded further into small acid-soluble oligonucleotides. This Bordetella avium (strain 197N) protein is Exodeoxyribonuclease 7 large subunit.